The chain runs to 239 residues: 1-(5-phosphoribosyl)-5-[(5-phosphoribosylamino)methylideneamino] imidazole-4-carboxamide isomerase (239 aa).

The Proton acceptor role is filled by Asp9. Asp131 (proton donor) is an active-site residue.

This sequence belongs to the HisA/HisF family.

The protein resides in the cytoplasm. It carries out the reaction 1-(5-phospho-beta-D-ribosyl)-5-[(5-phospho-beta-D-ribosylamino)methylideneamino]imidazole-4-carboxamide = 5-[(5-phospho-1-deoxy-D-ribulos-1-ylimino)methylamino]-1-(5-phospho-beta-D-ribosyl)imidazole-4-carboxamide. The protein operates within amino-acid biosynthesis; L-histidine biosynthesis; L-histidine from 5-phospho-alpha-D-ribose 1-diphosphate: step 4/9. The sequence is that of 1-(5-phosphoribosyl)-5-[(5-phosphoribosylamino)methylideneamino] imidazole-4-carboxamide isomerase from Bacteroides thetaiotaomicron (strain ATCC 29148 / DSM 2079 / JCM 5827 / CCUG 10774 / NCTC 10582 / VPI-5482 / E50).